We begin with the raw amino-acid sequence, 54 residues long: UPF0391 membrane protein pRL90066 (54 aa).

2 helical membrane-spanning segments follow: residues 5–25 (ALVFLVVALIAGVLGFGGIAG) and 28–48 (ASIAQVLFFIFLVLFVVSLVM).

It belongs to the UPF0391 family.

Its subcellular location is the cell membrane. This Rhizobium johnstonii (strain DSM 114642 / LMG 32736 / 3841) (Rhizobium leguminosarum bv. viciae) protein is UPF0391 membrane protein pRL90066.